We begin with the raw amino-acid sequence, 336 residues long: tRNA N6-adenosine threonylcarbamoyltransferase (336 aa).

Residues His114 and His118 each coordinate Fe cation. Substrate-binding positions include 136 to 140 (LVSGG), Asp169, Gly182, Asp186, and Asn275. Asp301 lines the Fe cation pocket.

It belongs to the KAE1 / TsaD family. Fe(2+) is required as a cofactor.

The protein resides in the cytoplasm. It carries out the reaction L-threonylcarbamoyladenylate + adenosine(37) in tRNA = N(6)-L-threonylcarbamoyladenosine(37) in tRNA + AMP + H(+). In terms of biological role, required for the formation of a threonylcarbamoyl group on adenosine at position 37 (t(6)A37) in tRNAs that read codons beginning with adenine. Is involved in the transfer of the threonylcarbamoyl moiety of threonylcarbamoyl-AMP (TC-AMP) to the N6 group of A37, together with TsaE and TsaB. TsaD likely plays a direct catalytic role in this reaction. This chain is tRNA N6-adenosine threonylcarbamoyltransferase, found in Streptococcus pneumoniae (strain CGSP14).